A 475-amino-acid chain; its full sequence is Bifunctional protein HldE (475 aa).

The ribokinase stretch occupies residues 1-320 (MNSSYLNFKD…AIMFQRSHNT (320 aa)). ATP is bound at residue 196–199 (NLLE). Asp265 is an active-site residue. A cytidylyltransferase region spans residues 346–475 (FTNGCFDILH…TTSIIEKANL (130 aa)).

It in the N-terminal section; belongs to the carbohydrate kinase PfkB family. In the C-terminal section; belongs to the cytidylyltransferase family. As to quaternary structure, homodimer.

The catalysed reaction is D-glycero-beta-D-manno-heptose 7-phosphate + ATP = D-glycero-beta-D-manno-heptose 1,7-bisphosphate + ADP + H(+). It catalyses the reaction D-glycero-beta-D-manno-heptose 1-phosphate + ATP + H(+) = ADP-D-glycero-beta-D-manno-heptose + diphosphate. Its pathway is nucleotide-sugar biosynthesis; ADP-L-glycero-beta-D-manno-heptose biosynthesis; ADP-L-glycero-beta-D-manno-heptose from D-glycero-beta-D-manno-heptose 7-phosphate: step 1/4. The protein operates within nucleotide-sugar biosynthesis; ADP-L-glycero-beta-D-manno-heptose biosynthesis; ADP-L-glycero-beta-D-manno-heptose from D-glycero-beta-D-manno-heptose 7-phosphate: step 3/4. In terms of biological role, catalyzes the phosphorylation of D-glycero-D-manno-heptose 7-phosphate at the C-1 position to selectively form D-glycero-beta-D-manno-heptose-1,7-bisphosphate. Its function is as follows. Catalyzes the ADP transfer from ATP to D-glycero-beta-D-manno-heptose 1-phosphate, yielding ADP-D-glycero-beta-D-manno-heptose. This is Bifunctional protein HldE from Marinomonas sp. (strain MWYL1).